A 305-amino-acid polypeptide reads, in one-letter code: FMRFamide-related peptides type HF-4 (305 aa).

The first 19 residues, 1–19, serve as a signal peptide directing secretion; it reads MTSLCLTIAPAVLSLICLS. A phenylalanine amide mark is found at Phe-36, Phe-47, and Phe-66. The residue at position 75 (Ile-75) is an Isoleucine amide. Phenylalanine amide is present on residues Phe-84 and Phe-93. Ile-102 bears the Isoleucine amide mark. 7 positions are modified to phenylalanine amide: Phe-111, Phe-120, Phe-129, Phe-138, Phe-147, Phe-156, and Phe-165. Positions 168–305 are excised as a propeptide; sequence SVDGEIEAGV…EHKQEYMRFG (138 aa).

Belongs to the FARP (FMRFamide related peptide) family. In terms of tissue distribution, central nervous system.

It localises to the secreted. In terms of biological role, can function as both cardioregulatory hormones and transmitters and may regulate cardiovascular function. This is FMRFamide-related peptides type HF-4 from Cornu aspersum (Brown garden snail).